A 265-amino-acid chain; its full sequence is Hydroxyethylthiazole kinase (265 aa).

Position 55 (Met55) interacts with substrate. The ATP site is built by Arg130 and Ser176. Gly203 contacts substrate.

Belongs to the Thz kinase family. Mg(2+) serves as cofactor.

The enzyme catalyses 5-(2-hydroxyethyl)-4-methylthiazole + ATP = 4-methyl-5-(2-phosphooxyethyl)-thiazole + ADP + H(+). Its pathway is cofactor biosynthesis; thiamine diphosphate biosynthesis; 4-methyl-5-(2-phosphoethyl)-thiazole from 5-(2-hydroxyethyl)-4-methylthiazole: step 1/1. Functionally, catalyzes the phosphorylation of the hydroxyl group of 4-methyl-5-beta-hydroxyethylthiazole (THZ). The sequence is that of Hydroxyethylthiazole kinase from Leptospira interrogans serogroup Icterohaemorrhagiae serovar Lai (strain 56601).